Consider the following 150-residue polypeptide: Large ribosomal subunit protein uL15 (150 aa).

A compositionally biased stretch (polar residues) spans 1-15; the sequence is MNLSNLQPAEGSTHN. The segment at 1-52 is disordered; it reads MNLSNLQPAEGSTHNQNKRLGRGEGSGKGGTSARGHKGAKSRSGYSKKIGFE. Gly residues predominate over residues 23 to 32; the sequence is GEGSGKGGTS.

Belongs to the universal ribosomal protein uL15 family. Part of the 50S ribosomal subunit.

Functionally, binds to the 23S rRNA. This Flavobacterium psychrophilum (strain ATCC 49511 / DSM 21280 / CIP 103535 / JIP02/86) protein is Large ribosomal subunit protein uL15.